Reading from the N-terminus, the 488-residue chain is Zinc finger protein 345 (488 aa).

C2H2-type zinc fingers lie at residues L62–H84, Y90–H112, F118–H140, Y146–H168, Y174–H196, Y202–H224, Y230–H252, Y258–H280, Y286–H308, Y314–H336, Y342–H364, Y370–H392, Y398–H420, Y426–H448, and Y454–H476.

It belongs to the krueppel C2H2-type zinc-finger protein family.

It localises to the nucleus. May be involved in transcriptional regulation. The sequence is that of Zinc finger protein 345 (ZNF345) from Homo sapiens (Human).